The primary structure comprises 642 residues: MPVIRFCDGSQQVYKHSVSLREIIENKKPNIIRSLIAISVNNSFSNFNTLITEDSSISFISKKDCEALNIIRYSCIQLLNYAAKKTWPSCKIGESEITKSGFYCDIDFENSITEEDFFILENNMKTLIKREYFISHQNISFDHAYEMFKKKSEIYKIHLIKKYINKKNKISLYYHENYFDIDMGMQVFNIKFCKYFKLQKIGGIYWKGDHKNKMLQRIYGTAWSTKKELDKHLSYINELKKRDHRKIGKLLNLYHMQKESPGMIFWHNNGWIIFNELEIFVREKLKEYKYKEVKTPLLIDKSIWQKSGHWDNYQDAIFTTSSENREYCIKPMNCPGHVQIFNCGLKSYRDLPIRMAEFGSCHRNESSGSLHGLMRIRNFTQDDAHIFCTQEQLRYEINNCIKMIYDLYSTFNFKKILVKFSTRPKKRIGDESVWDQAEKDLSDVLIENNLKFEHQEGEGAFYGPKIEFVLQDSLDRNWQCGTIQLDFYLPIRLRSFYIDEHNHQKIPIIIHRAILGSIERFIGILIEEFSGKLPTWLSPIQVVILSITDSHINYVKKIVQHFSDINIRVESDLRNEKIGFKIREHTLRQIPYILICGEKEIKSKKISVRTRNGYNLGIIDIDCFIKKLQKEIFTRSFYQMEE.

Residues 1–61 (MPVIRFCDGS…TEDSSISFIS (61 aa)) form the TGS domain. Positions 243–534 (DHRKIGKLLN…LIEEFSGKLP (292 aa)) are catalytic. Cys-334, His-385, and His-511 together coordinate Zn(2+).

It belongs to the class-II aminoacyl-tRNA synthetase family. In terms of assembly, homodimer. The cofactor is Zn(2+).

The protein localises to the cytoplasm. The catalysed reaction is tRNA(Thr) + L-threonine + ATP = L-threonyl-tRNA(Thr) + AMP + diphosphate + H(+). In terms of biological role, catalyzes the attachment of threonine to tRNA(Thr) in a two-step reaction: L-threonine is first activated by ATP to form Thr-AMP and then transferred to the acceptor end of tRNA(Thr). Also edits incorrectly charged L-seryl-tRNA(Thr). This chain is Threonine--tRNA ligase, found in Buchnera aphidicola subsp. Schizaphis graminum (strain Sg).